Reading from the N-terminus, the 518-residue chain is Cytochrome P450 736A117 (518 aa).

Residue Asn12 is glycosylated (N-linked (GlcNAc...) asparagine). The helical transmembrane segment at 17 to 37 (FLQPLAFTLLAIFLVLLYTWY) threads the bilayer. 3 N-linked (GlcNAc...) asparagine glycosylation sites follow: Asn185, Asn275, and Asn356. Cys460 is a binding site for heme.

Belongs to the cytochrome P450 family. It depends on heme as a cofactor. In terms of tissue distribution, expressed at similar levels in fruit kernel, seedlings, leaves, stems and buds.

It localises to the membrane. The sequence is that of Cytochrome P450 736A117 from Prunus mume (Japanese apricot).